Here is a 289-residue protein sequence, read N- to C-terminus: E3 ubiquitin-protein ligase MARCHF5 (289 aa).

Residues 4–73 form an RING-CH-type zinc finger; it reads VDEPPEKHCW…PQCGTEYRIV (70 aa). Zn(2+)-binding residues include Cys12, Cys15, Cys31, Cys33, His41, Cys44, Cys63, and Cys66. 4 consecutive transmembrane segments (helical) span residues 97-117, 137-157, 202-222, and 236-256; these read FAAA…YGAV, PLFL…GKMI, LSVS…NLVG, and TILG…YFKQ.

The protein resides in the mitochondrion outer membrane. It is found in the endoplasmic reticulum membrane. It catalyses the reaction S-ubiquitinyl-[E2 ubiquitin-conjugating enzyme]-L-cysteine + [acceptor protein]-L-lysine = [E2 ubiquitin-conjugating enzyme]-L-cysteine + N(6)-ubiquitinyl-[acceptor protein]-L-lysine.. Its pathway is protein modification; protein ubiquitination. Functionally, mitochondrial E3 ubiquitin-protein ligase that plays a crucial role in the control of mitochondrial morphology by acting as a positive regulator of mitochondrial fission. May play a role in the prevention of cell senescence acting as a regulator of mitochondrial quality control. In Danio rerio (Zebrafish), this protein is E3 ubiquitin-protein ligase MARCHF5 (marchf5).